The chain runs to 530 residues: Autoinducer-2 kinase (530 aa).

It belongs to the FGGY kinase family.

It localises to the cytoplasm. It catalyses the reaction (S)-4,5-dihydroxypentane-2,3-dione + ATP = (2S)-2-hydroxy-3,4-dioxopentyl phosphate + ADP + H(+). Functionally, catalyzes the phosphorylation of autoinducer-2 (AI-2) to phospho-AI-2, which subsequently inactivates the transcriptional regulator LsrR and leads to the transcription of the lsr operon. Phosphorylates the ring-open form of (S)-4,5-dihydroxypentane-2,3-dione (DPD), which is the precursor to all AI-2 signaling molecules, at the C5 position. This chain is Autoinducer-2 kinase, found in Photorhabdus laumondii subsp. laumondii (strain DSM 15139 / CIP 105565 / TT01) (Photorhabdus luminescens subsp. laumondii).